We begin with the raw amino-acid sequence, 518 residues long: Retinal dehydrogenase 2 (518 aa).

The residue at position 168 (Tyr-168) is a Phosphotyrosine. NAD(+) is bound by residues 184 to 186 (IPW), 210 to 213 (KPAE), and 264 to 266 (STE). Glu-286 serves as the catalytic Proton acceptor. Cys-320 functions as the Nucleophile in the catalytic mechanism. Ser-351 bears the Phosphoserine mark. Residues 366–370 (KQYNK) and Glu-417 each bind NAD(+).

This sequence belongs to the aldehyde dehydrogenase family. Homotetramer.

It localises to the cytoplasm. The catalysed reaction is retinal + NAD(+) + H2O = retinoate + NADH + 2 H(+). It carries out the reaction all-trans-retinal + NAD(+) + H2O = all-trans-retinoate + NADH + 2 H(+). The enzyme catalyses all-trans-13,14-dihydroretinal + NAD(+) + H2O = all-trans-13,14-dihydroretinoate + NADH + 2 H(+). It participates in cofactor metabolism; retinol metabolism. Catalyzes the NAD-dependent oxidation of aldehyde substrates, such as all-trans-retinal and all-trans-13,14-dihydroretinal, to their corresponding carboxylic acids, all-trans-retinoate and all-trans-13,14-dihydroretinoate, respectively. Retinoate signaling is critical for the transcriptional control of many genes, for instance it is crucial for initiation of meiosis in both male and female. Recognizes retinal as substrate, both in its free form and when bound to cellular retinol-binding protein. Lacks activity with benzaldehyde, acetaldehyde and octanal. Displays complete lack of activity with citral. This chain is Retinal dehydrogenase 2 (Aldh1a2), found in Mus musculus (Mouse).